We begin with the raw amino-acid sequence, 407 residues long: MAPRRRKAKRRRHTLRSECKDKCKCHVQCYVSPRKRRRKLKPQGDDDINTTHQQQAALTEEQRREEVEEEGEERERRGEEEREGEGGEEGEGREEAEEEEAEEKEAEEEEAEEAEEEAEEEEAEEAEAEEEEAEEEEAEEEEAEEAEEEEAEEAEEEAEEEEAEEEAEEEAEEAEEAEEEAEEEAEEAEEAEEAEEAEEEAEEAEEEAEEAEEEAEEAEEAEEAEEAEEEAEEAEEEEEEAGPSTPRLPHYKVVGQKPSTQPGGVPKLCLKMQPQHRSRLPKGKQSHDKVPKKYQARNKFFSQAAPSVLDLSPKSWCWVVDFWGPTDALYRLSRSLSFPGAVSSGIQTFPKGPHATGPWVYFITVYCRTFQTAKEVIKAQKKYEKKYPRSAKLKASLGKFSKSLPIE.

The segment at 34-268 is disordered; the sequence is RKRRRKLKPQ…STQPGGVPKL (235 aa). Residues 81 to 241 are compositionally biased toward acidic residues; sequence EREGEGGEEG…EEAEEEEEEA (161 aa).

The protein belongs to the herpesviridae ICP22 family.

The sequence is that of Transcriptional regulator ICP22 homolog (73) from Saimiriine herpesvirus 2 (strain 11) (SaHV-2).